A 127-amino-acid polypeptide reads, in one-letter code: Large-conductance mechanosensitive channel (127 aa).

Transmembrane regions (helical) follow at residues 9–29 (EFAM…GVAF), 32–52 (IVTA…LGGI), and 75–95 (VIDF…INLL).

Belongs to the MscL family. As to quaternary structure, homopentamer.

The protein localises to the cell inner membrane. Its function is as follows. Channel that opens in response to stretch forces in the membrane lipid bilayer. May participate in the regulation of osmotic pressure changes within the cell. The sequence is that of Large-conductance mechanosensitive channel from Legionella pneumophila (strain Paris).